Reading from the N-terminus, the 491-residue chain is UDP-N-acetylmuramate--L-alanine ligase (491 aa).

126-132 provides a ligand contact to ATP; sequence GTHGKTT.

It belongs to the MurCDEF family.

The protein localises to the cytoplasm. It carries out the reaction UDP-N-acetyl-alpha-D-muramate + L-alanine + ATP = UDP-N-acetyl-alpha-D-muramoyl-L-alanine + ADP + phosphate + H(+). The protein operates within cell wall biogenesis; peptidoglycan biosynthesis. Functionally, cell wall formation. This is UDP-N-acetylmuramate--L-alanine ligase from Salmonella choleraesuis (strain SC-B67).